The sequence spans 1295 residues: Phosphoribosylformylglycinamidine synthase (1295 aa).

Residues 305–327 (WPGAATGSGGEIRDEGATGRGAK) form a disordered region. ATP contacts are provided by residues 307-318 (GAATGSGGEIRD) and alanine 678. Positions 718, 722, and 884 each coordinate Mg(2+). Serine 886 is an ATP binding site. Residues 1042 to 1295 (VAVLREQGVN…IFRNARKQLG (254 aa)) form the Glutamine amidotransferase type-1 domain. The Nucleophile role is filled by cysteine 1135. Residues histidine 1260 and glutamate 1262 contribute to the active site.

The protein in the N-terminal section; belongs to the FGAMS family. Monomer.

It localises to the cytoplasm. It carries out the reaction N(2)-formyl-N(1)-(5-phospho-beta-D-ribosyl)glycinamide + L-glutamine + ATP + H2O = 2-formamido-N(1)-(5-O-phospho-beta-D-ribosyl)acetamidine + L-glutamate + ADP + phosphate + H(+). The protein operates within purine metabolism; IMP biosynthesis via de novo pathway; 5-amino-1-(5-phospho-D-ribosyl)imidazole from N(2)-formyl-N(1)-(5-phospho-D-ribosyl)glycinamide: step 1/2. Its function is as follows. Phosphoribosylformylglycinamidine synthase involved in the purines biosynthetic pathway. Catalyzes the ATP-dependent conversion of formylglycinamide ribonucleotide (FGAR) and glutamine to yield formylglycinamidine ribonucleotide (FGAM) and glutamate. This is Phosphoribosylformylglycinamidine synthase from Shigella boydii serotype 4 (strain Sb227).